The chain runs to 757 residues: Probable tRNA (uracil-O(2)-)-methyltransferase (757 aa).

2 disordered regions span residues 55–93 and 108–138; these read EARG…GPEQ and QQEE…GDFP. Residues 72–84 are compositionally biased toward gly residues; it reads PGPGQGSPGGGPG. At Ser-78 the chain carries Phosphoserine. The span at 123 to 136 shows a compositional bias: basic and acidic residues; it reads DSGHPGHAEGREGD. Ser-533 is subject to Phosphoserine. The C3H1-type zinc finger occupies 713-743; the sequence is ACKTRLCWFFMHHPDGCALSTDCCPFAHGPA.

Belongs to the TRM44 family.

It localises to the cytoplasm. The enzyme catalyses uridine(44) in tRNA(Ser) + S-adenosyl-L-methionine = 2'-O-methyluridine(44) in tRNA(Ser) + S-adenosyl-L-homocysteine + H(+). Functionally, probable adenosyl-L-methionine (AdoMet)-dependent tRNA (uracil-O(2)-)-methyltransferase. The chain is Probable tRNA (uracil-O(2)-)-methyltransferase (TRMT44) from Homo sapiens (Human).